The sequence spans 156 residues: Arginine repressor (156 aa).

This sequence belongs to the ArgR family.

Its subcellular location is the cytoplasm. Its pathway is amino-acid biosynthesis; L-arginine biosynthesis [regulation]. Regulates arginine biosynthesis genes. This is Arginine repressor from Erwinia tasmaniensis (strain DSM 17950 / CFBP 7177 / CIP 109463 / NCPPB 4357 / Et1/99).